A 124-amino-acid chain; its full sequence is Small ribosomal subunit protein bS6 (124 aa).

Belongs to the bacterial ribosomal protein bS6 family.

Functionally, binds together with bS18 to 16S ribosomal RNA. This is Small ribosomal subunit protein bS6 from Bordetella avium (strain 197N).